The primary structure comprises 453 residues: MITLKQALSLSQDELETLKNEIDAKVRASDLNAYIKAPSLNGASAKGVPILIKDNISVKGWEITCSSKILEGYVAPYHASVMENLHQNGMAGFGLSNMDEFAMGSTTESSCYGITKNPRDKNRVPGGSSGGSAAAVAGGLAVAALGSDTGGSIRQPASYCGCVGLKPTYGRVSRYGLIAYCSSFDQIGPITQNVEDASILFDAISGHDNKDSTSANLKPTQTFKNLNRDKRFKIAILRDHIKDASNEVQLAYENTLKALKEMGHEIVEKKMLDSHYQISIYYIISMAEASSNLARFDGVRYGRRAQNIKDLKELYLKSRSEGFGDEVKRRIMLGNFVLSSGYYDAYYLKAQQMRLMIKEQYNKIFEEVDLIFTPVAPTSAHLFNYHASPLEMYLSDIYTIGANLSGLPALSLPVAKDPLGLPIGMQFIAKAFDEQSLLDVSYALEQELDLKLD.

Residues K53 and S128 each act as charge relay system in the active site. S152 (acyl-ester intermediate) is an active-site residue.

It belongs to the amidase family. GatA subfamily. As to quaternary structure, heterotrimer of A, B and C subunits.

It catalyses the reaction L-glutamyl-tRNA(Gln) + L-glutamine + ATP + H2O = L-glutaminyl-tRNA(Gln) + L-glutamate + ADP + phosphate + H(+). Allows the formation of correctly charged Gln-tRNA(Gln) through the transamidation of misacylated Glu-tRNA(Gln) in organisms which lack glutaminyl-tRNA synthetase. The reaction takes place in the presence of glutamine and ATP through an activated gamma-phospho-Glu-tRNA(Gln). This chain is Glutamyl-tRNA(Gln) amidotransferase subunit A, found in Helicobacter pylori (strain P12).